The sequence spans 176 residues: Large ribosomal subunit protein bL17m (176 aa).

Residues 1–8 (MRLSLAAA) constitute a mitochondrion transit peptide.

The protein belongs to the bacterial ribosomal protein bL17 family. Component of the mitochondrial ribosome large subunit (39S) which comprises a 16S rRNA and about 50 distinct proteins.

Its subcellular location is the mitochondrion. The chain is Large ribosomal subunit protein bL17m (Mrpl17) from Rattus norvegicus (Rat).